A 201-amino-acid chain; its full sequence is MKSLQIICLLFVLVARGSCHSCEICHNFGKDCQSDETEECASAEDQCGTVLMEVSSAPISFRSIHRKCFSSSLCKLERFDINIGHDSYLRGRIHCCDEARCEAQQFPGLPLSFPNGYHCPGILGVFSVDSSEHEAICRGTETKCINLAGFRKERYPIDIAYNIKGCTSSCPELRLNRTHEEHGNGLIKVECTEASKITPSE.

Positions 1 to 19 (MKSLQIICLLFVLVARGSC) are cleaved as a signal peptide. 8 disulfides stabilise this stretch: Cys22-Cys47, Cys25-Cys32, Cys40-Cys68, Cys74-Cys95, Cys96-Cys101, Cys119-Cys144, Cys137-Cys166, and Cys170-Cys191. Asn176 carries N-linked (GlcNAc...) asparagine glycosylation.

Belongs to the CNF-like-inhibitor family. In terms of assembly, heterotrimer of 2 subunits A and 1 subunit B; non-covalently linked. Post-translationally, N-glycosylated, probably by biantennary structure. Glycosylation does not change PLA2 inhibitory activity. Expressed by the liver.

It is found in the secreted. Inhibits the enzymatic activity of all phospholipase A2 tested, binding them with micromole to nanomole affinity. This is Phospholipase A2 inhibitor NAI from Notechis ater (Black tiger snake).